The following is a 258-amino-acid chain: Small ribosomal subunit protein uS2 (258 aa).

The disordered stretch occupies residues 226–258 (QGVSNEEVAAEQNIDLDEKEKSEETEATEATEE).

This sequence belongs to the universal ribosomal protein uS2 family.

The chain is Small ribosomal subunit protein uS2 from Staphylococcus aureus (strain COL).